The chain runs to 440 residues: tRNA-2-methylthio-N(6)-dimethylallyladenosine synthase (440 aa).

An MTTase N-terminal domain is found at 7–123 (NTFYIHTFGC…LPQLIEQARS (117 aa)). Residues Cys16, Cys52, Cys86, Cys159, Cys163, and Cys166 each contribute to the [4Fe-4S] cluster site. One can recognise a Radical SAM core domain in the interval 145-375 (RQGSISAFVP…IDLQNTISGE (231 aa)). The 63-residue stretch at 378-440 (QQAIGSVVEV…TSATLTGRPV (63 aa)) folds into the TRAM domain.

This sequence belongs to the methylthiotransferase family. MiaB subfamily. Monomer. [4Fe-4S] cluster is required as a cofactor.

Its subcellular location is the cytoplasm. It catalyses the reaction N(6)-dimethylallyladenosine(37) in tRNA + (sulfur carrier)-SH + AH2 + 2 S-adenosyl-L-methionine = 2-methylsulfanyl-N(6)-dimethylallyladenosine(37) in tRNA + (sulfur carrier)-H + 5'-deoxyadenosine + L-methionine + A + S-adenosyl-L-homocysteine + 2 H(+). Functionally, catalyzes the methylthiolation of N6-(dimethylallyl)adenosine (i(6)A), leading to the formation of 2-methylthio-N6-(dimethylallyl)adenosine (ms(2)i(6)A) at position 37 in tRNAs that read codons beginning with uridine. The protein is tRNA-2-methylthio-N(6)-dimethylallyladenosine synthase of Pelodictyon phaeoclathratiforme (strain DSM 5477 / BU-1).